We begin with the raw amino-acid sequence, 120 residues long: MEEPEMQLKGKKVTDKFTESVYVLANEPSVALYRLQEHVRRSLPELAQHKADMQRWEEQSQGAIYTVEYACSAVKSLVDSSVYFRSVEGLLKQAISIRDHMNTSAQGHSQEKLSPPPSLA.

A disordered region spans residues 101 to 120 (MNTSAQGHSQEKLSPPPSLA). Ser-109 is subject to Phosphoserine.

Belongs to the BORCS8 family. In terms of assembly, component of the BLOC-one-related complex (BORC) which is composed of BLOC1S1, BLOC1S2, BORCS5, BORCS6, BORCS7, BORCS8, KXD1 and SNAPIN.

The protein resides in the lysosome membrane. Its function is as follows. As part of the BLOC-one-related complex (BORC), it plays a role in the movement and localization of lysosomes at the cell periphery. Associated with the cytosolic face of lysosomes, BORC recruits ARL8B to the lysosomal membrane and couples lysosomes to microtubule plus-end-directed kinesin motors, driving lysosome movement toward the cell periphery. This Mus musculus (Mouse) protein is BLOC-1-related complex subunit 8.